Here is a 1939-residue protein sequence, read N- to C-terminus: Myosin-4 (1939 aa).

A Myosin N-terminal SH3-like domain is found at 33–82 (DAKSSVFVVDAKESYVKATVQSREGGKVTAKTEGGATVTVKDDQVFSMNP). A Phosphoserine modification is found at Ser36. A phosphothreonine mark is found at Thr64 and Thr69. A Phosphoserine modification is found at Ser79. Residues 86-782 (DKIEDMAMMT…LLGTLEEMRD (697 aa)) form the Myosin motor domain. Lys130 carries the post-translational modification N6,N6,N6-trimethyllysine. 179–186 (GESGAGKT) contributes to the ATP binding site. Residue Tyr389 is modified to Phosphotyrosine. Thr391 bears the Phosphothreonine mark. Position 392 is a phosphoserine (Ser392). Thr419 is modified (phosphothreonine). Tyr424 carries the phosphotyrosine modification. Phosphoserine is present on Ser625. The tract at residues 659-681 (LNKLMTNLKSTHPHFVRCLIPNE) is actin-binding. His757 bears the Pros-methylhistidine mark. An actin-binding region spans residues 761-775 (KFGHTKVFFKAGLLG). At Thr776 the chain carries Phosphothreonine. An IQ domain is found at 785-814 (LAQLITRTQAVCRGYLMRVEFKKMMERRES). A coiled-coil region spans residues 843–1939 (LLKSAETEKE…EVHTKVISEE (1097 aa)). A phosphoserine mark is found at Ser1092 and Ser1096. Disordered stretches follow at residues 1128–1147 (AERA…SREL) and 1153–1172 (RLEE…KKRE). Ser1162 and Ser1237 each carry phosphoserine. Thr1241 is subject to Phosphothreonine. Position 1243 is a phosphoserine (Ser1243). Position 1255 is a phosphothreonine (Thr1255). Phosphoserine is present on Ser1261. Phosphothreonine is present on Thr1265. Residues 1276-1299 (ELSTQKARLHTESGEFSRQLDEKD) are disordered. At Ser1278 the chain carries Phosphoserine. The segment covering 1284–1299 (LHTESGEFSRQLDEKD) has biased composition (basic and acidic residues). A Phosphothreonine modification is found at Thr1286. Residues Ser1288, Ser1292, Ser1303, Ser1306, and Ser1413 each carry the phosphoserine modification. A Phosphotyrosine modification is found at Tyr1464. Phosphothreonine is present on Thr1467. Ser1474 is modified (phosphoserine). Tyr1492 carries the post-translational modification Phosphotyrosine. Phosphoserine is present on Ser1495. Thr1501 is modified (phosphothreonine). Ser1514 carries the phosphoserine modification. Thr1517 carries the post-translational modification Phosphothreonine. Ser1542, Ser1547, Ser1554, Ser1574, Ser1600, Ser1603, Ser1714, and Ser1726 each carry phosphoserine. Thr1730 and Thr1736 each carry phosphothreonine. Residue Ser1739 is modified to Phosphoserine.

The protein belongs to the TRAFAC class myosin-kinesin ATPase superfamily. Myosin family. Muscle myosin is a hexameric protein that consists of 2 heavy chain subunits (MHC), 2 alkali light chain subunits (MLC) and 2 regulatory light chain subunits (MLC-2). In terms of tissue distribution, expressed in type 2b myofibers in the tibialis anterior muscle (at protein level).

Its subcellular location is the cytoplasm. The protein resides in the myofibril. Its function is as follows. Muscle contraction. The sequence is that of Myosin-4 (Myh4) from Mus musculus (Mouse).